The following is a 49-amino-acid chain: Large ribosomal subunit protein bL36 (49 aa).

This sequence belongs to the bacterial ribosomal protein bL36 family.

This is Large ribosomal subunit protein bL36 from Delftia acidovorans (strain DSM 14801 / SPH-1).